The primary structure comprises 114 residues: Holo-[acyl-carrier-protein] synthase (114 aa).

Mg(2+)-binding residues include aspartate 8 and glutamate 58.

The protein belongs to the P-Pant transferase superfamily. AcpS family. Mg(2+) serves as cofactor.

Its subcellular location is the cytoplasm. It catalyses the reaction apo-[ACP] + CoA = holo-[ACP] + adenosine 3',5'-bisphosphate + H(+). Transfers the 4'-phosphopantetheine moiety from coenzyme A to a Ser of acyl-carrier-protein. The sequence is that of Holo-[acyl-carrier-protein] synthase from Mycoplasma genitalium (strain ATCC 33530 / DSM 19775 / NCTC 10195 / G37) (Mycoplasmoides genitalium).